The sequence spans 151 residues: Dehydrin Rab16D (151 aa).

Positions 1 to 138 (MEYQGQHGGH…TADAGGEKKG (138 aa)) are disordered. A compositionally biased stretch (basic and acidic residues) spans 39–51 (EPAREDKKTDGVL). 2 stretches are compositionally biased toward low complexity: residues 90–105 (GNNQ…TTTG) and 117–132 (IATG…TADA).

It belongs to the plant dehydrin family.

This Oryza sativa subsp. indica (Rice) protein is Dehydrin Rab16D (RAB16D).